Reading from the N-terminus, the 144-residue chain is Large ribosomal subunit protein uL22 (144 aa).

Residues 124–137 are compositionally biased toward basic residues; the sequence is RLKKRVLGQNKRKQ. The disordered stretch occupies residues 124 to 144; the sequence is RLKKRVLGQNKRKQSVSGEKK.

It belongs to the universal ribosomal protein uL22 family. Part of the 50S ribosomal subunit.

In terms of biological role, this protein binds specifically to 23S rRNA; its binding is stimulated by other ribosomal proteins, e.g. L4, L17, and L20. It is important during the early stages of 50S assembly. It makes multiple contacts with different domains of the 23S rRNA in the assembled 50S subunit and ribosome. Functionally, the globular domain of the protein is located near the polypeptide exit tunnel on the outside of the subunit, while an extended beta-hairpin is found that lines the wall of the exit tunnel in the center of the 70S ribosome. This chain is Large ribosomal subunit protein uL22, found in Mycoplasmoides gallisepticum (strain R(low / passage 15 / clone 2)) (Mycoplasma gallisepticum).